Reading from the N-terminus, the 422-residue chain is UDP-N-acetylglucosamine 1-carboxyvinyltransferase (422 aa).

Lysine 22–asparagine 23 contributes to the phosphoenolpyruvate binding site. Arginine 93 contacts UDP-N-acetyl-alpha-D-glucosamine. The active-site Proton donor is the cysteine 117. 2-(S-cysteinyl)pyruvic acid O-phosphothioketal is present on cysteine 117. UDP-N-acetyl-alpha-D-glucosamine is bound by residues arginine 122–leucine 126, lysine 162–valine 165, aspartate 307, and isoleucine 329.

Belongs to the EPSP synthase family. MurA subfamily.

The protein resides in the cytoplasm. The catalysed reaction is phosphoenolpyruvate + UDP-N-acetyl-alpha-D-glucosamine = UDP-N-acetyl-3-O-(1-carboxyvinyl)-alpha-D-glucosamine + phosphate. It participates in cell wall biogenesis; peptidoglycan biosynthesis. In terms of biological role, cell wall formation. Adds enolpyruvyl to UDP-N-acetylglucosamine. The protein is UDP-N-acetylglucosamine 1-carboxyvinyltransferase of Hamiltonella defensa subsp. Acyrthosiphon pisum (strain 5AT).